Consider the following 558-residue polypeptide: MKNNNNKSSSSSSYDSSLSPSSSSSSHQNWLSFSLSNNNNNFNSSSNPNLTSSTSDHHHPHPSHLSLFQAFSTSPVERQDGSPGVSPSDATAVLSVYPGGPKLENFLGGGASTTTTRPMQQVQSLGGVVFSSDLQPPLHPPSAAEIYDSELKSIAASFLGNYSGGHSSEVSSVHKQQPNPLAVSEASPTPKKNVESFGQRTSIYRGVTRHRWTGRYEAHLWDNSCRREGQSRKGRQVYLGGYDKEDKAARAYDLAALKYWGPTTTTNFPISNYESELEEMKHMTRQEFVASLRRKSSGFSRGASMYRGVTRHHQHGRWQARIGRVAGNKDLYLGTFSTQEEAAEAYDIAAIKFRGLNAVTNFDISRYDVKSIASCNLPVGGLMPKPSPATAAADKTVDLSPSDSPSLTTPSLTFNVATPVNDHGGTFYHTGIPIKPDPADHYWSNIFGFQANPKAEMRPLANFGSDLHNPSPGYAIMPVMQEGENNFGGSFVGSDGYNNHSAASNPVSAIPLSSTTTMSNGNEGYGGNINWINNNISSSYQTAKSNLSVLHTPVFGLE.

Residues 1–54 (MKNNNNKSSSSSSYDSSLSPSSSSSSHQNWLSFSLSNNNNNFNSSSNPNLTSST) are compositionally biased toward low complexity. Disordered regions lie at residues 1–65 (MKNN…PSHL), 74–93 (SPVE…ATAV), and 166–195 (HSSE…KNVE). DNA-binding regions (AP2/ERF) lie at residues 203 to 269 (IYRG…TNFP) and 305 to 363 (MYRG…TNFD). The disordered stretch occupies residues 387-406 (SPATAAADKTVDLSPSDSPS).

This sequence belongs to the AP2/ERF transcription factor family. AP2 subfamily. Expressed in roots, seedlings, inflorescence, and siliques. Also detected at low levels in leaves.

Its subcellular location is the nucleus. Its function is as follows. Probably acts as a transcriptional activator. Binds to the GCC-box pathogenesis-related promoter element. May be involved in the regulation of gene expression by stress factors and by components of stress signal transduction pathways. Involved in the regulation of floral organs size. This is AP2-like ethylene-responsive transcription factor AIL5 from Arabidopsis thaliana (Mouse-ear cress).